The following is a 356-amino-acid chain: Biotin synthase (356 aa).

Positions 1–28 are disordered; the sequence is MTIQANVPTGDETSDEASRQTSNEASSE. The Radical SAM core domain occupies 77-302; it reads EDVEVEGIIS…RTVLRYAGGR (226 aa). 3 residues coordinate [4Fe-4S] cluster: cysteine 92, cysteine 96, and cysteine 99. Positions 135, 168, 227, and 297 each coordinate [2Fe-2S] cluster.

The protein belongs to the radical SAM superfamily. Biotin synthase family. Homodimer. [4Fe-4S] cluster serves as cofactor. Requires [2Fe-2S] cluster as cofactor.

It carries out the reaction (4R,5S)-dethiobiotin + (sulfur carrier)-SH + 2 reduced [2Fe-2S]-[ferredoxin] + 2 S-adenosyl-L-methionine = (sulfur carrier)-H + biotin + 2 5'-deoxyadenosine + 2 L-methionine + 2 oxidized [2Fe-2S]-[ferredoxin]. Its pathway is cofactor biosynthesis; biotin biosynthesis; biotin from 7,8-diaminononanoate: step 2/2. Its function is as follows. Catalyzes the conversion of dethiobiotin (DTB) to biotin by the insertion of a sulfur atom into dethiobiotin via a radical-based mechanism. The sequence is that of Biotin synthase from Arthrobacter sp. (strain FB24).